Here is a 234-residue protein sequence, read N- to C-terminus: MRTFNDFSGLPADRPKLTARQAQILELIRNAIAQTGAPPTRAEIAAELGFRSPNAAEEHLKALAKKGVIELVSGTSRGIRLRTDSLQALNESRISQFSPPVQRLEQLTLPLVGRVAAGSPILAQEHIERTYFFESRLFEQQPDYLLKVRGMSMRDIGIMDGDLLAVKQAREAKNGQIVVARLGDEVTVKRFHRNQHLIELLSENPDFKPIVVQPGEPFELEGLAVGLIRGSLAM.

The segment at residues 41–61 (RAEIAAELGFRSPNAAEEHLK) is a DNA-binding region (H-T-H motif). Active-site for autocatalytic cleavage activity residues include Ser152 and Lys189.

Belongs to the peptidase S24 family. Homodimer.

The catalysed reaction is Hydrolysis of Ala-|-Gly bond in repressor LexA.. Represses a number of genes involved in the response to DNA damage (SOS response), including recA and lexA. In the presence of single-stranded DNA, RecA interacts with LexA causing an autocatalytic cleavage which disrupts the DNA-binding part of LexA, leading to derepression of the SOS regulon and eventually DNA repair. This Polaromonas naphthalenivorans (strain CJ2) protein is LexA repressor.